The sequence spans 369 residues: Cobalt-precorrin-5B C(1)-methyltransferase (369 aa).

It belongs to the CbiD family.

It carries out the reaction Co-precorrin-5B + S-adenosyl-L-methionine = Co-precorrin-6A + S-adenosyl-L-homocysteine. It functions in the pathway cofactor biosynthesis; adenosylcobalamin biosynthesis; cob(II)yrinate a,c-diamide from sirohydrochlorin (anaerobic route): step 6/10. Catalyzes the methylation of C-1 in cobalt-precorrin-5B to form cobalt-precorrin-6A. The sequence is that of Cobalt-precorrin-5B C(1)-methyltransferase from Leptospira borgpetersenii serovar Hardjo-bovis (strain JB197).